The chain runs to 896 residues: Valine--tRNA ligase (896 aa).

A 'HIGH' region motif is present at residues 43–53; sequence PNVTGSLHIGH. Residues 545 to 549 carry the 'KMSKS' region motif; it reads KMSKS. K548 lines the ATP pocket. The stretch at 831–857 forms a coiled coil; the sequence is DLDAERARLAKGIAAAEKERDGLAARL.

It belongs to the class-I aminoacyl-tRNA synthetase family. ValS type 1 subfamily. In terms of assembly, monomer.

The protein localises to the cytoplasm. It carries out the reaction tRNA(Val) + L-valine + ATP = L-valyl-tRNA(Val) + AMP + diphosphate. Functionally, catalyzes the attachment of valine to tRNA(Val). As ValRS can inadvertently accommodate and process structurally similar amino acids such as threonine, to avoid such errors, it has a 'posttransfer' editing activity that hydrolyzes mischarged Thr-tRNA(Val) in a tRNA-dependent manner. This chain is Valine--tRNA ligase, found in Rhizorhabdus wittichii (strain DSM 6014 / CCUG 31198 / JCM 15750 / NBRC 105917 / EY 4224 / RW1) (Sphingomonas wittichii).